A 156-amino-acid polypeptide reads, in one-letter code: 6,7-dimethyl-8-ribityllumazine synthase (156 aa).

Residues phenylalanine 22, 57 to 59 (AYE), and 81 to 83 (TVI) each bind 5-amino-6-(D-ribitylamino)uracil. A (2S)-2-hydroxy-3-oxobutyl phosphate-binding site is contributed by 86–87 (GT). Histidine 89 functions as the Proton donor in the catalytic mechanism. Phenylalanine 114 is a binding site for 5-amino-6-(D-ribitylamino)uracil. Arginine 128 is a binding site for (2S)-2-hydroxy-3-oxobutyl phosphate.

This sequence belongs to the DMRL synthase family. Forms an icosahedral capsid composed of 60 subunits, arranged as a dodecamer of pentamers.

The enzyme catalyses (2S)-2-hydroxy-3-oxobutyl phosphate + 5-amino-6-(D-ribitylamino)uracil = 6,7-dimethyl-8-(1-D-ribityl)lumazine + phosphate + 2 H2O + H(+). The protein operates within cofactor biosynthesis; riboflavin biosynthesis; riboflavin from 2-hydroxy-3-oxobutyl phosphate and 5-amino-6-(D-ribitylamino)uracil: step 1/2. Catalyzes the formation of 6,7-dimethyl-8-ribityllumazine by condensation of 5-amino-6-(D-ribitylamino)uracil with 3,4-dihydroxy-2-butanone 4-phosphate. This is the penultimate step in the biosynthesis of riboflavin. The chain is 6,7-dimethyl-8-ribityllumazine synthase from Mannheimia succiniciproducens (strain KCTC 0769BP / MBEL55E).